Here is a 142-residue protein sequence, read N- to C-terminus: Large-conductance mechanosensitive channel (142 aa).

The next 3 helical transmembrane spans lie at 15 to 35 (AFVM…GAAF), 38 to 58 (IVTS…IGNI), and 82 to 102 (GMFI…FVAI).

This sequence belongs to the MscL family. Homopentamer.

Its subcellular location is the cell inner membrane. Channel that opens in response to stretch forces in the membrane lipid bilayer. May participate in the regulation of osmotic pressure changes within the cell. This is Large-conductance mechanosensitive channel from Fusobacterium nucleatum subsp. nucleatum (strain ATCC 25586 / DSM 15643 / BCRC 10681 / CIP 101130 / JCM 8532 / KCTC 2640 / LMG 13131 / VPI 4355).